An 873-amino-acid polypeptide reads, in one-letter code: MASRRKSTTPCMVLASEQDPDLELISDLDEGPPVLTPVENTRAESISSDEEVHESVDSDNQQNKKVEGGYECKYCTFQTPDLNMFTFHVDSEHPNVVLNSSYVCVECNFLTKRYDALSEHNLKYHPGEENFKLTMVKRNNQTIFEQTINDLTFDGSFVKEENAEQAESTEVSSSGISISKTPIMKMMKNKVENKRIAVHHNSVEDVPEEKENEIKPDREETVENPSSSASESNTSTSIVNRIHPSTASTVVTPAAVLPGLAQVITAVSAQQNSNLIPKVLIPVNSIPTYNAALDNNPLLLNTYNKFPYPTMSEITVLSAQAKYTEEQIKIWFSAQRLKHGVSWTPEEVEEARRKQFNGTVHTVPQTITVIPTHISTGSNGLPSILQTCQIVGQPGLVLTQVAGTNTLPVTAPIALTVAGVPSQNNVQKSQVPAAQPTAETKPATAAVPTSQSVKHETALVNPDSFGIRAKKTKEQLAELKVSYLKNQFPHDSEIIRLMKITGLTKGEIKKWFSDTRYNQRNSKSNQCLHLNNDSSTTIIIDSSDETTESPTVGTVQPKQSWNPFPDFTPQKFKEKTAEQLRVLQASFLNNSVLTDEELNRLRAQTKLTRREIDAWFTEKKKSKALKEEKMEIDESNAGSSKEEAGETSPGDESGAPKSGSTGKICKKTPEQLHMLKSAFVRTQWPSPEEYDKLAKESGLARTDIVSWFGDTRYAWKNGNLKWYYYYQSANSSSMNGLSSLRKRGRGRPKGRGRGRPRGRPRGSKRINNWDRGPSLIKFKTGTAILKDYYLKHKFLNEQDLDELVNKSHMGYEQVREWFAERQRRSELGIELFEENEEEDEVIDDQEEDEEETDDSDTWEPPRHVKRKLSKSDD.

Positions 24–63 (LISDLDEGPPVLTPVENTRAESISSDEEVHESVDSDNQQN) are disordered. A Phosphothreonine modification is found at T36. Residues S45, S47, and S48 each carry the phosphoserine modification. 2 C2H2-type zinc fingers span residues 70-93 (YECKYCTFQTPDLNMFTFHVDSEH) and 102-125 (YVCVECNFLTKRYDALSEHNLKYH). Residue K159 forms a Glycyl lysine isopeptide (Lys-Gly) (interchain with G-Cter in SUMO2) linkage. The segment at 198 to 236 (VHHNSVEDVPEEKENEIKPDREETVENPSSSASESNTST) is disordered. S202 is modified (phosphoserine). Residues 212 to 221 (NEIKPDREET) are compositionally biased toward basic and acidic residues. A compositionally biased stretch (low complexity) spans 223 to 236 (ENPSSSASESNTST). The segment at 272–432 (NSNLIPKVLI…QNNVQKSQVP (161 aa)) is required for dimerization. The segment at 272–564 (NSNLIPKVLI…VQPKQSWNPF (293 aa)) is required for interaction with NFYA. A DNA-binding region (homeobox 1) is located at residues 284 to 346 (NSIPTYNAAL…LKHGVSWTPE (63 aa)). The tract at residues 431-454 (VPAAQPTAETKPATAAVPTSQSVK) is disordered. Glycyl lysine isopeptide (Lys-Gly) (interchain with G-Cter in SUMO2) cross-links involve residues K441, K454, and K485. The homeobox 2 DNA-binding region spans 464-526 (SFGIRAKKTK…YNQRNSKSNQ (63 aa)). Disordered regions lie at residues 544–563 (DETTESPTVGTVQPKQSWNP), 626–668 (KEEK…CKKT), and 732–769 (SSMNGLSSLRKRGRGRPKGRGRGRPRGRPRGSKRINNW). The segment covering 550 to 562 (PTVGTVQPKQSWN) has biased composition (polar residues). The segment at residues 569–630 (PQKFKEKTAE…KSKALKEEKM (62 aa)) is a DNA-binding region (homeobox 3). K629 is covalently cross-linked (Glycyl lysine isopeptide (Lys-Gly) (interchain with G-Cter in SUMO2)). A Phosphoserine modification is found at S648. Positions 660–722 (STGKICKKTP…YAWKNGNLKW (63 aa)) form a DNA-binding region, homeobox 4. The interval 734-768 (MNGLSSLRKRGRGRPKGRGRGRPRGRPRGSKRINN) is required for nuclear localization. The span at 740–764 (LRKRGRGRPKGRGRGRPRGRPRGSK) shows a compositional bias: basic residues. The residue at position 774 (S774) is a Phosphoserine. Residues 777–832 (KFKTGTAILKDYYLKHKFLNEQDLDELVNKSHMGYEQVREWFAERQRRSELGIELF) constitute a DNA-binding region (homeobox 5). The segment at 829-873 (IELFEENEEEDEVIDDQEEDEEETDDSDTWEPPRHVKRKLSKSDD) is disordered. The segment covering 831 to 857 (LFEENEEEDEVIDDQEEDEEETDDSDT) has biased composition (acidic residues). The segment at 831 to 873 (LFEENEEEDEVIDDQEEDEEETDDSDTWEPPRHVKRKLSKSDD) is required for repressor activity. Over residues 863–873 (HVKRKLSKSDD) the composition is skewed to basic residues.

It belongs to the ZHX family. As to quaternary structure, forms homodimers. Heterodimer (via HD1 domain) with ZHX2 (via HD1 domain). Also forms a heterodimer with ZHX3 which is a prerequisite for repressor activity. Interacts with ATF7IP and NFYA. Interacts (via homeobox domains) with DNMT3B (via PWWP domain).

It localises to the nucleus. Functionally, acts as a transcriptional repressor. Increases DNMT3B-mediated repressive transcriptional activity when DNMT3B is tethered to DNA. May link molecule between DNMT3B and other co-repressor proteins. The protein is Zinc fingers and homeoboxes protein 1 (ZHX1) of Pongo pygmaeus (Bornean orangutan).